Here is a 386-residue protein sequence, read N- to C-terminus: Chaperone protein DnaJ (386 aa).

Positions 6-70 (DYYEVLGVDK…QKRAAYDQYG (65 aa)) constitute a J domain. Residues 141 to 223 (GKDTEVSYKR…CHGTGHEKKT (83 aa)) form a CR-type zinc finger. Zn(2+) contacts are provided by Cys-154, Cys-157, Cys-171, Cys-174, Cys-197, Cys-200, Cys-211, and Cys-214. CXXCXGXG motif repeat units lie at residues 154–161 (CHTCGGNG), 171–178 (CHKCKGSG), 197–204 (CDVCHGTG), and 211–218 (CETCHGTG). The tract at residues 363 to 386 (LTGQSTEEQQSEGFFDKMKDAFKK) is disordered. Residues 364–374 (TGQSTEEQQSE) show a composition bias toward polar residues. The span at 376–386 (FFDKMKDAFKK) shows a compositional bias: basic and acidic residues.

This sequence belongs to the DnaJ family. As to quaternary structure, homodimer. It depends on Zn(2+) as a cofactor.

It is found in the cytoplasm. In terms of biological role, participates actively in the response to hyperosmotic and heat shock by preventing the aggregation of stress-denatured proteins and by disaggregating proteins, also in an autonomous, DnaK-independent fashion. Unfolded proteins bind initially to DnaJ; upon interaction with the DnaJ-bound protein, DnaK hydrolyzes its bound ATP, resulting in the formation of a stable complex. GrpE releases ADP from DnaK; ATP binding to DnaK triggers the release of the substrate protein, thus completing the reaction cycle. Several rounds of ATP-dependent interactions between DnaJ, DnaK and GrpE are required for fully efficient folding. Also involved, together with DnaK and GrpE, in the DNA replication of plasmids through activation of initiation proteins. The protein is Chaperone protein DnaJ of Tetragenococcus halophilus (Pediococcus halophilus).